Consider the following 210-residue polypeptide: MADS-box protein AeAP3-2 (210 aa).

In terms of domain architecture, MADS-box spans 1 to 36; the sequence is GGLLKKARELAILCDAQLGVIIFSSSGKMFEFSSPP. The 91-residue stretch at 59-149 folds into the K-box domain; sequence NQQVYCEITR…YRVIQDHHAA (91 aa).

In terms of tissue distribution, expressed exclusively in the carpel.

It localises to the nucleus. Its function is as follows. Probable transcription factor. The polypeptide is MADS-box protein AeAP3-2 (AP3-2) (Asarum europaeum (Asarabacca)).